We begin with the raw amino-acid sequence, 228 residues long: Thermonuclease (228 aa).

Residues 1-23 (MTEYLLSAGICMAIVSILLIGMA) form the signal peptide. A propeptide spanning residues 24–60 (ISNVSKGQYAKRFFFFATSCLVLTLVVVSSLSSSANA) is cleaved from the precursor. Over residues 58–70 (ANASQTDNGVNRS) the composition is skewed to polar residues. Positions 58–83 (ANASQTDNGVNRSGSEDPTVYSATST) are disordered. Aspartate 100 is a binding site for Ca(2+). Arginine 114 is an active-site residue. 2 residues coordinate Ca(2+): aspartate 119 and threonine 120. Active-site residues include glutamate 122 and arginine 166.

Belongs to the thermonuclease family. Requires Ca(2+) as cofactor.

It is found in the secreted. The catalysed reaction is Endonucleolytic cleavage to nucleoside 3'-phosphates and 3'-phosphooligonucleotide end-products.. Functionally, enzyme that catalyzes the hydrolysis of both DNA and RNA at the 5' position of the phosphodiester bond. The polypeptide is Thermonuclease (nuc) (Staphylococcus aureus (strain Mu50 / ATCC 700699)).